The primary structure comprises 969 residues: Manganese resistance protein MNR2 (969 aa).

Residues 1 to 11 show a composition bias toward basic and acidic residues; sequence MSTDNSQKDEG. Disordered stretches follow at residues 1–49, 96–153, 167–186, and 199–256; these read MSTD…SRRP, GAFI…DLSP, HKSF…NANN, and VNNN…NNSS. Residues 1–912 are Cytoplasmic-facing; it reads MSTDNSQKDE…DMNDVLGKIT (912 aa). Over residues 13–23 the composition is skewed to low complexity; sequence PLLSPYSSSPQ. Over residues 24–36 the composition is skewed to basic residues; the sequence is LRKKKRNQKRRKD. The segment covering 37–48 has biased composition (basic and acidic residues); it reads KFVGHLKSDSRR. Residue Ser-114 is modified to Phosphoserine. Positions 141–152 are enriched in polar residues; the sequence is SDQNRSLVSDLS. The residue at position 175 (Ser-175) is a Phosphoserine. Thr-177 is subject to Phosphothreonine. A Phosphoserine modification is found at Ser-182. 2 stretches are compositionally biased toward low complexity: residues 225–234 and 244–256; these read NKNSKSTSSD and SRPS…NNSS. Ser-383 bears the Phosphoserine mark. Disordered stretches follow at residues 559–662 and 746–769; these read VRRR…KPRE and QSDD…DEDA. A compositionally biased stretch (basic and acidic residues) spans 565-578; it reads EKQESATLDHESIS. Thr-571 bears the Phosphothreonine mark. Residues Ser-576 and Ser-582 each carry the phosphoserine modification. Composition is skewed to low complexity over residues 590-607 and 622-632; these read SNES…ASRS and ANRTTNTSSSS. The span at 749-769 shows a compositional bias: acidic residues; it reads DSSDSDSSDSDSDSGASDEDA. Residues 913–933 form a helical membrane-spanning segment; it reads ILGTIVLPMNVITGLWGMNVI. The Extracellular portion of the chain corresponds to 934-941; that stretch reads VPGQYRDS. Residues 942-962 form a helical membrane-spanning segment; the sequence is LTWFIGIVLFMCMLACSAYMY. Residues 963–969 are Cytoplasmic-facing; the sequence is TKRRFGF.

This sequence belongs to the CorA metal ion transporter (MIT) (TC 1.A.35) family.

The protein localises to the membrane. In Saccharomyces cerevisiae (strain ATCC 204508 / S288c) (Baker's yeast), this protein is Manganese resistance protein MNR2 (MNR2).